Consider the following 184-residue polypeptide: Cathelicidin-related peptide Pt_CRAMP2 (184 aa).

The N-terminal stretch at Met-1 to Ser-22 is a signal peptide. The propeptide occupies Leu-23–Val-150. Intrachain disulfides connect Cys-81-Cys-92 and Cys-103-Cys-120. A compositionally biased stretch (acidic residues) spans Glu-125–Lys-144. A disordered region spans residues Glu-125–Pro-147.

This sequence belongs to the cathelicidin family. Expressed by the venom gland.

The protein localises to the secreted. It is found in the target cell membrane. Functionally, potent antimicrobial peptide against most of Gram-negative bacteria, some Gram-positive bacteria (Bacillus) and some fungi (C.albicans, P.pastoris, A.terreus, A.nidulans, and C.globosum). Adopts an amphipathic alpha helical conformation, that may allow to partition into the target membrane. No hemolytic and cytotoxic activities have been observed on mammalian cells. The protein is Cathelicidin-related peptide Pt_CRAMP2 of Pseudonaja textilis (Eastern brown snake).